Here is a 171-residue protein sequence, read N- to C-terminus: Shikimate kinase (171 aa).

14-19 is a binding site for ATP; sequence GAGKST. S18 is a binding site for Mg(2+). Residues D36, R60, and G82 each coordinate substrate. R120 contributes to the ATP binding site. Residue R139 coordinates substrate. Q156 is a binding site for ATP.

The protein belongs to the shikimate kinase family. In terms of assembly, monomer. Mg(2+) is required as a cofactor.

The protein localises to the cytoplasm. It carries out the reaction shikimate + ATP = 3-phosphoshikimate + ADP + H(+). Its pathway is metabolic intermediate biosynthesis; chorismate biosynthesis; chorismate from D-erythrose 4-phosphate and phosphoenolpyruvate: step 5/7. Its function is as follows. Catalyzes the specific phosphorylation of the 3-hydroxyl group of shikimic acid using ATP as a cosubstrate. The chain is Shikimate kinase from Shewanella sediminis (strain HAW-EB3).